The following is an 843-amino-acid chain: Protein P (843 aa).

The terminal protein domain (TP) stretch occupies residues 1-177 (MPLSYPHFRK…FCGSPYSWEQ (177 aa)). Residues 178–346 (ELQHGSTSIN…YCLSHIINLL (169 aa)) are spacer. Disordered regions lie at residues 202 to 221 (SGILSRPSAGSSIQGKFQQS) and 285 to 310 (TNPSLSTSKRHSSTGHAVELHSVPPG). The interval 347 to 690 (EDWGPCYEHG…YMNLYPVARQ (344 aa)) is polymerase/reverse transcriptase domain (RT). A Reverse transcriptase domain is found at 357–600 (QHHIRTPRTP…YTLNFMGYVI (244 aa)). 3 residues coordinate Mg(2+): Asp-429, Asp-551, and Asp-552.

Belongs to the hepadnaviridae P protein family.

The enzyme catalyses DNA(n) + a 2'-deoxyribonucleoside 5'-triphosphate = DNA(n+1) + diphosphate. It carries out the reaction Endonucleolytic cleavage to 5'-phosphomonoester.. With respect to regulation, activated by host HSP70 and HSP40 in vitro to be able to bind the epsilon loop of the pgRNA. Because deletion of the RNase H region renders the protein partly chaperone-independent, the chaperones may be needed indirectly to relieve occlusion of the RNA-binding site by this domain. Inhibited by several reverse-transcriptase inhibitors: Lamivudine, Adefovir and Entecavir. Multifunctional enzyme that converts the viral RNA genome into dsDNA in viral cytoplasmic capsids. This enzyme displays a DNA polymerase activity that can copy either DNA or RNA templates, and a ribonuclease H (RNase H) activity that cleaves the RNA strand of RNA-DNA heteroduplexes in a partially processive 3'- to 5'-endonucleasic mode. Neo-synthesized pregenomic RNA (pgRNA) are encapsidated together with the P protein, and reverse-transcribed inside the nucleocapsid. Initiation of reverse-transcription occurs first by binding the epsilon loop on the pgRNA genome, and is initiated by protein priming, thereby the 5'-end of (-)DNA is covalently linked to P protein. Partial (+)DNA is synthesized from the (-)DNA template and generates the relaxed circular DNA (RC-DNA) genome. After budding and infection, the RC-DNA migrates in the nucleus, and is converted into a plasmid-like covalently closed circular DNA (cccDNA). The activity of P protein does not seem to be necessary for cccDNA generation, and is presumably released from (+)DNA by host nuclear DNA repair machinery. The chain is Protein P from Hepatitis B virus genotype F1 (isolate Argentina/sa11/2000) (HBV-F).